The following is a 596-amino-acid chain: Cis-3-hydroxy-L-proline dehydratase (596 aa).

The active-site Proton acceptor is S67.

This sequence belongs to the AcnX family. In terms of assembly, monomer. The cofactor is Fe(3+).

The catalysed reaction is cis-3-hydroxy-L-proline = 1-pyrroline-2-carboxylate + H2O. With respect to regulation, inhibited by Zn(2+). Not inhibited by pyrrole-2-carboxylate nor its derivative 2-thiophenecarboxylate. In terms of biological role, catalyzes the dehydration of cis-3-hydroxy-L-proline (c3LHyp) to Delta(1)-pyrroline-2-carboxylate (Pyr2C). No activity with L-proline, trans-4-hydroxy-L-proline (t4LHyp), cis-4-hydroxy-L-proline (c4LHyp), trans-3-hydroxy-L-proline (t3LHyp), D-proline, cis-4-hydroxy-D-proline (c4DHyp), trans-4-hydroxy-D-proline (t4DHyp) or L-serine as substrates. Because of the low catalytic efficiency, C3LHyp is likely not a main physiological substrate of this enzyme in H.jecorina. This chain is Cis-3-hydroxy-L-proline dehydratase, found in Hypocrea jecorina (strain QM6a) (Trichoderma reesei).